Reading from the N-terminus, the 34-residue chain is Egg-releasing peptide (34 aa).

This chain is Egg-releasing peptide, found in Aplysia californica (California sea hare).